The chain runs to 59 residues: Small integral membrane protein 30 (59 aa).

The first 24 residues, 1–24, serve as a signal peptide directing secretion; that stretch reads MNSVSTQLILVLASLLLILPVVEA. The Extracellular portion of the chain corresponds to 25 to 29; the sequence is VEAGD. Residues 30–50 traverse the membrane as a helical segment; the sequence is AIALLLGVVLSITGICACLGI. The Cytoplasmic portion of the chain corresponds to 51-59; sequence YARKRNGQM.

In terms of assembly, interacts (via transmembrane domain) with antiviral protein MAVS (via transmembrane domain); the interaction disrupts MAVS interaction with RIGI and inhibits MAVS aggregation, resulting in the repression of type I interferon signaling and innate immune responses.

Its subcellular location is the endoplasmic reticulum membrane. The protein resides in the mitochondrion membrane. In terms of biological role, negatively regulates antiviral innate immune responses. Disrupts the interaction of antiviral protein MAVS with innate immune receptor RIGI and inhibits MAVS aggregation, resulting in the repression of type I interferon signaling and innate immune responses. This Mus musculus (Mouse) protein is Small integral membrane protein 30.